Consider the following 251-residue polypeptide: uncharacterized protein (251 aa).

The protein belongs to the chlamydial CPn_0206/CT_203/TC_0475 family.

This is an uncharacterized protein from Chlamydia trachomatis serovar D (strain ATCC VR-885 / DSM 19411 / UW-3/Cx).